The chain runs to 465 residues: 23S rRNA (uracil(1939)-C(5))-methyltransferase RlmD (465 aa).

Residues 1–20 (MSEAVPLSTPGASHAGAATD) form a disordered region. A TRAM domain is found at 12–80 (ASHAGAATDR…PTYEQAQVVD (69 aa)). [4Fe-4S] cluster-binding residues include Cys93, Cys99, Cys102, and Cys181. S-adenosyl-L-methionine-binding residues include Gln289, Phe318, Asn323, Glu339, Asn367, and Asp388. Residue Cys421 is the Nucleophile of the active site.

The protein belongs to the class I-like SAM-binding methyltransferase superfamily. RNA M5U methyltransferase family. RlmD subfamily.

It carries out the reaction uridine(1939) in 23S rRNA + S-adenosyl-L-methionine = 5-methyluridine(1939) in 23S rRNA + S-adenosyl-L-homocysteine + H(+). Functionally, catalyzes the formation of 5-methyl-uridine at position 1939 (m5U1939) in 23S rRNA. In Burkholderia thailandensis (strain ATCC 700388 / DSM 13276 / CCUG 48851 / CIP 106301 / E264), this protein is 23S rRNA (uracil(1939)-C(5))-methyltransferase RlmD.